The chain runs to 630 residues: Probable potassium transport system protein Kup 1 (630 aa).

The next 12 helical transmembrane spans lie at 15–35 (LLAM…TSPL), 58–78 (LISL…VLFL), 104–124 (TAIL…DAMI), 142–162 (PALS…LFAV), 173–193 (FFGP…FMHI), 208–228 (AVAF…AVFL), 252–272 (WFTV…AFVL), 290–310 (ALLP…QAVI), 342–362 (IYLP…VFIF), 368–388 (LATA…VLAF), 399–419 (AWWA…FLGA), and 424–444 (IHDG…IMWT).

This sequence belongs to the HAK/KUP transporter (TC 2.A.72) family.

The protein localises to the cell inner membrane. The catalysed reaction is K(+)(in) + H(+)(in) = K(+)(out) + H(+)(out). In terms of biological role, transport of potassium into the cell. Likely operates as a K(+):H(+) symporter. This Sinorhizobium medicae (strain WSM419) (Ensifer medicae) protein is Probable potassium transport system protein Kup 1.